Here is a 209-residue protein sequence, read N- to C-terminus: Large ribosomal subunit protein bL25 (209 aa).

The interval 188 to 209 is disordered; it reads STSMEKEGEGSQEPTAAPSSEN. The segment covering 199-209 has biased composition (polar residues); sequence QEPTAAPSSEN.

It belongs to the bacterial ribosomal protein bL25 family. CTC subfamily. In terms of assembly, part of the 50S ribosomal subunit; part of the 5S rRNA/L5/L18/L25 subcomplex. Contacts the 5S rRNA. Binds to the 5S rRNA independently of L5 and L18.

Its function is as follows. This is one of the proteins that binds to the 5S RNA in the ribosome where it forms part of the central protuberance. The chain is Large ribosomal subunit protein bL25 from Ehrlichia canis (strain Jake).